Consider the following 435-residue polypeptide: Mitogen-activated protein kinase HOG1 (435 aa).

At T2 the chain carries N-acetylthreonine. Residues Y23–S302 form the Protein kinase domain. ATP is bound by residues V29–V37 and K52. The Proton acceptor role is filled by D144. Arsenite is bound by residues C156 and C161. T174 carries the post-translational modification Phosphothreonine; by PBS2. The short motif at T174–Y176 is the TXY element. Y176 is modified (phosphotyrosine; by PBS2). C205 contacts arsenite.

This sequence belongs to the protein kinase superfamily. Ser/Thr protein kinase family. MAP kinase subfamily. HOG1 sub-subfamily. In terms of assembly, interacts with CDC37, HOT1, KIN28, PTP2, PTP3, RBP1, RCK2, RPD3, SIC1, SMP1 and SIN4. Requires Mg(2+) as cofactor. In terms of processing, activated by PBS2-mediated concomitant phosphorylation at Thr-174 and Tyr-176. Post-translationally, dually phosphorylated on Thr-174 and Tyr-176, which activates the enzyme.

It localises to the cytoplasm. It is found in the nucleus. It carries out the reaction L-seryl-[protein] + ATP = O-phospho-L-seryl-[protein] + ADP + H(+). The enzyme catalyses L-threonyl-[protein] + ATP = O-phospho-L-threonyl-[protein] + ADP + H(+). Its activity is regulated as follows. Activated by tyrosine and threonine phosphorylation. Inactivated by dephosphorylation via recruitment of PTC1 to the PBS2-HOG1 complex after adaptation to osmotic stress. PTP2 and PTP3 inactivate HOG1 by dephosphorylating Tyr-176, while the PP2Cs PTC1 and PTC2 or PTC3 dephosphorylate Thr-174 in the activation loop. Functionally, proline-directed serine/threonine-protein kinase involved in a signal transduction pathway that is activated by changes in the osmolarity of the extracellular environment. Controls osmotic regulation of transcription via the stress response element (STRE) in promoters of target genes. Upon osmotic shock, associates with the SKO1-SSN6-TUP1 complex, phosphorylates SKO1, and converts it into an activator that subsequently recruits Swi/Snf and SAGA complexes. Activates the SMP1 transcription factor and the RCK2 kinase, both also involved in the regulation of the expression of a subset of osmotic stress-related genes. Phosphorylation of HSL1 by HOG1 leads to a G2 arrest essential for cell survival at high osmolarity. Also mediates cell-cycle arrest in G1 phase by the dual targeting of SIC1. Phosphorylates methyltransferase DOT1 at least on 'Ser-565' and 'Thr-576'. Regulates MFA2 ARE-mediated translation in response to carbon source. Targets RPD3 histone deacetylase to osmoresponsive promoters to induce gene expression on stress. Required for the Golgi apparatus localization of MNN1. Plays an essential role in maintaining water homeostasis, arsenite detoxification, copper-resistance, cold-resistance, hydrogen peroxide response, adaptation to citric acid stress, and repression of the mating pathway activity. Functions as an arsenic sensor and effector via direct binding to arsenic and subsequent phosphorylation of the ARR1 transcription factor. The protein is Mitogen-activated protein kinase HOG1 (HOG1) of Saccharomyces cerevisiae (strain ATCC 204508 / S288c) (Baker's yeast).